Reading from the N-terminus, the 285-residue chain is UPF0173 metal-dependent hydrolase Pnuc_1524 (285 aa).

Belongs to the UPF0173 family.

The protein is UPF0173 metal-dependent hydrolase Pnuc_1524 of Polynucleobacter asymbioticus (strain DSM 18221 / CIP 109841 / QLW-P1DMWA-1) (Polynucleobacter necessarius subsp. asymbioticus).